The chain runs to 246 residues: FAD synthetase (246 aa).

This sequence belongs to the RibF family.

The catalysed reaction is FMN + ATP + H(+) = FAD + diphosphate. The protein operates within cofactor biosynthesis; FAD biosynthesis; FAD from FMN: step 1/1. Catalyzes the adenylation of flavin mononucleotide (FMN) to form flavin adenine dinucleotide (FAD) coenzyme. Can also catalyze, with lower efficiency, the adenylation of the toxic riboflavin analogs 8-demethyl-8-aminoriboflavin mononucleotide (AFMN) and roseoflavin mononucleotide (RoFMN) to 8-demethyl-8-aminoriboflavin adenine dinucleotide (AFAD) and roseoflavin adenine dinucleotide (RoFAD), respectively. In Listeria monocytogenes serovar 1/2a (strain ATCC BAA-679 / EGD-e), this protein is FAD synthetase.